The chain runs to 66 residues: Conotoxin TsMEKL-03 (66 aa).

The signal sequence occupies residues Val1–Ala9. Residues Leu10 to Gly38 constitute a propeptide that is removed on maturation. 3 disulfides stabilise this stretch: Cys40–Cys54, Cys47–Cys58, and Cys53–Cys63.

It belongs to the conotoxin O2 superfamily. Expressed by the venom duct.

The protein resides in the secreted. In Conus tessulatus (Tessellate cone), this protein is Conotoxin TsMEKL-03.